A 549-amino-acid chain; its full sequence is Probable protein kinase UbiB (549 aa).

The region spanning 123–501 (DFDETPLASA…QQQAHKSNYM (379 aa)) is the Protein kinase domain. ATP-binding positions include 129-137 (LASASISQV) and Lys-152. The active-site Proton acceptor is the Asp-287. 2 helical membrane-spanning segments follow: residues 499–516 (NYML…TLLF) and 521–540 (TLWS…FIGW).

This sequence belongs to the ABC1 family. UbiB subfamily.

It localises to the cell inner membrane. The protein operates within cofactor biosynthesis; ubiquinone biosynthesis [regulation]. Is probably a protein kinase regulator of UbiI activity which is involved in aerobic coenzyme Q (ubiquinone) biosynthesis. The sequence is that of Probable protein kinase UbiB from Shewanella sp. (strain W3-18-1).